Consider the following 476-residue polypeptide: DnaJ protein P58IPK homolog A (476 aa).

The signal sequence occupies residues 1-28 (MVAMARWPWRVLLPLLLLHSSPVFFVFA). TPR repeat units follow at residues 36–69 (PSTL…EPNH), 70–103 (SEAY…KPGS), 116–150 (AQNA…SPDC), 152–184 (KAKL…DEDN), 185–218 (LDAL…DPEH), 231–264 (LVKK…DPDH), 269–302 (VHLY…DGEL), and 304–336 (DALT…SPQD). In terms of domain architecture, J spans 357-423 (DWYKILGISK…DKRVRYDRGE (67 aa)).

As to quaternary structure, interacts with BIP1.

It localises to the endoplasmic reticulum lumen. Functionally, may play a role in protein folding in the endoplasmic reticulum. The polypeptide is DnaJ protein P58IPK homolog A (Oryza sativa subsp. japonica (Rice)).